Consider the following 136-residue polypeptide: Photosystem II extrinsic protein U (136 aa).

The N-terminal stretch at 1 to 28 is a signal peptide; the sequence is MKQLAQRLFSLALVLALVLGISVQSAQA.

Belongs to the PsbU family. As to quaternary structure, PSII is composed of 1 copy each of membrane proteins PsbA, PsbB, PsbC, PsbD, PsbE, PsbF, PsbH, PsbI, PsbJ, PsbK, PsbL, PsbM, PsbT, PsbX, PsbY, PsbZ, Psb30/Ycf12, peripheral proteins PsbO, CyanoQ (PsbQ), PsbU, PsbV and a large number of cofactors. It forms dimeric complexes.

The protein resides in the cellular thylakoid membrane. One of the extrinsic, lumenal subunits of photosystem II (PSII). PSII is a light-driven water plastoquinone oxidoreductase, using light energy to abstract electrons from H(2)O, generating a proton gradient subsequently used for ATP formation. The extrinsic proteins stabilize the structure of photosystem II oxygen-evolving complex (OEC), the ion environment of oxygen evolution and protect the OEC against heat-induced inactivation. This chain is Photosystem II extrinsic protein U, found in Synechococcus elongatus (strain ATCC 33912 / PCC 7942 / FACHB-805) (Anacystis nidulans R2).